The primary structure comprises 225 residues: ATP-dependent Clp protease proteolytic subunit (225 aa).

The Nucleophile role is filled by Ser101. His126 is a catalytic residue.

It belongs to the peptidase S14 family. Component of the chloroplastic Clp protease core complex.

The protein localises to the plastid. The protein resides in the chloroplast stroma. It catalyses the reaction Hydrolysis of proteins to small peptides in the presence of ATP and magnesium. alpha-casein is the usual test substrate. In the absence of ATP, only oligopeptides shorter than five residues are hydrolyzed (such as succinyl-Leu-Tyr-|-NHMec, and Leu-Tyr-Leu-|-Tyr-Trp, in which cleavage of the -Tyr-|-Leu- and -Tyr-|-Trp bonds also occurs).. Its function is as follows. Cleaves peptides in various proteins in a process that requires ATP hydrolysis. Has a chymotrypsin-like activity. Plays a major role in the degradation of misfolded proteins. This Chlorokybus atmophyticus (Soil alga) protein is ATP-dependent Clp protease proteolytic subunit.